Here is a 186-residue protein sequence, read N- to C-terminus: Peptidyl-tRNA hydrolase (186 aa).

Tyr14 contributes to the tRNA binding site. The Proton acceptor role is filled by His19. The tRNA site is built by Tyr61, Asn63, and Asn107.

The protein belongs to the PTH family. As to quaternary structure, monomer.

It localises to the cytoplasm. It catalyses the reaction an N-acyl-L-alpha-aminoacyl-tRNA + H2O = an N-acyl-L-amino acid + a tRNA + H(+). In terms of biological role, hydrolyzes ribosome-free peptidyl-tRNAs (with 1 or more amino acids incorporated), which drop off the ribosome during protein synthesis, or as a result of ribosome stalling. Its function is as follows. Catalyzes the release of premature peptidyl moieties from peptidyl-tRNA molecules trapped in stalled 50S ribosomal subunits, and thus maintains levels of free tRNAs and 50S ribosomes. This Helicobacter pylori (strain P12) protein is Peptidyl-tRNA hydrolase.